A 150-amino-acid chain; its full sequence is Ribosome maturation factor RimP (150 aa).

The protein belongs to the RimP family.

It localises to the cytoplasm. Required for maturation of 30S ribosomal subunits. The protein is Ribosome maturation factor RimP of Hahella chejuensis (strain KCTC 2396).